Consider the following 450-residue polypeptide: Phosphoglucosamine mutase (450 aa).

Catalysis depends on Ser97, which acts as the Phosphoserine intermediate. Ser97, Asp236, Asp238, and Asp240 together coordinate Mg(2+). Ser97 is subject to Phosphoserine.

This sequence belongs to the phosphohexose mutase family. The cofactor is Mg(2+). Activated by phosphorylation.

The catalysed reaction is alpha-D-glucosamine 1-phosphate = D-glucosamine 6-phosphate. Functionally, catalyzes the conversion of glucosamine-6-phosphate to glucosamine-1-phosphate. This Prochlorococcus marinus (strain AS9601) protein is Phosphoglucosamine mutase.